Consider the following 229-residue polypeptide: Cytochrome c oxidase subunit 2 (229 aa).

Residues 1–26 (MSTWANLGLQDSASPLMEQLIFFHDH) are Mitochondrial intermembrane-facing. Residues 27–48 (ALLILVMITVLVGYLMFMLFFN) form a helical membrane-spanning segment. The Mitochondrial matrix portion of the chain corresponds to 49-62 (SYVNRFLLHGQLIE). Residues 63–82 (MIWTILPAIILLFIAMPSLR) form a helical membrane-spanning segment. Residues 83-229 (LLYLLDEINE…IKWISNSVNS (147 aa)) are Mitochondrial intermembrane-facing. Histidine 161, cysteine 196, glutamate 198, cysteine 200, histidine 204, and methionine 207 together coordinate Cu cation. Glutamate 198 serves as a coordination point for Mg(2+).

The protein belongs to the cytochrome c oxidase subunit 2 family. As to quaternary structure, component of the cytochrome c oxidase (complex IV, CIV), a multisubunit enzyme composed of a catalytic core of 3 subunits and several supernumerary subunits. The complex exists as a monomer or a dimer and forms supercomplexes (SCs) in the inner mitochondrial membrane with ubiquinol-cytochrome c oxidoreductase (cytochrome b-c1 complex, complex III, CIII). It depends on Cu cation as a cofactor.

The protein localises to the mitochondrion inner membrane. It carries out the reaction 4 Fe(II)-[cytochrome c] + O2 + 8 H(+)(in) = 4 Fe(III)-[cytochrome c] + 2 H2O + 4 H(+)(out). Its function is as follows. Component of the cytochrome c oxidase, the last enzyme in the mitochondrial electron transport chain which drives oxidative phosphorylation. The respiratory chain contains 3 multisubunit complexes succinate dehydrogenase (complex II, CII), ubiquinol-cytochrome c oxidoreductase (cytochrome b-c1 complex, complex III, CIII) and cytochrome c oxidase (complex IV, CIV), that cooperate to transfer electrons derived from NADH and succinate to molecular oxygen, creating an electrochemical gradient over the inner membrane that drives transmembrane transport and the ATP synthase. Cytochrome c oxidase is the component of the respiratory chain that catalyzes the reduction of oxygen to water. Electrons originating from reduced cytochrome c in the intermembrane space (IMS) are transferred via the dinuclear copper A center (CU(A)) of subunit 2 and heme A of subunit 1 to the active site in subunit 1, a binuclear center (BNC) formed by heme A3 and copper B (CU(B)). The BNC reduces molecular oxygen to 2 water molecules using 4 electrons from cytochrome c in the IMS and 4 protons from the mitochondrial matrix. The protein is Cytochrome c oxidase subunit 2 (mt:CoII) of Drosophila miranda (Fruit fly).